The following is a 127-amino-acid chain: Ribosome-binding factor A (127 aa).

The protein belongs to the RbfA family. Monomer. Binds 30S ribosomal subunits, but not 50S ribosomal subunits or 70S ribosomes.

It is found in the cytoplasm. In terms of biological role, one of several proteins that assist in the late maturation steps of the functional core of the 30S ribosomal subunit. Associates with free 30S ribosomal subunits (but not with 30S subunits that are part of 70S ribosomes or polysomes). Required for efficient processing of 16S rRNA. May interact with the 5'-terminal helix region of 16S rRNA. The sequence is that of Ribosome-binding factor A from Chloroflexus aurantiacus (strain ATCC 29366 / DSM 635 / J-10-fl).